A 141-amino-acid polypeptide reads, in one-letter code: Cholinesterase (141 aa).

Residue asparagine 39 is glycosylated (N-linked (GlcNAc...) asparagine). Substrate is bound at residue 49–50 (GG). The active-site Acyl-ester intermediate is the serine 131. Residue serine 131 is modified to Phosphoserine.

It belongs to the type-B carboxylesterase/lipase family. In terms of assembly, homotetramer; disulfide-linked. Dimer of dimers. In terms of tissue distribution, present in most cells except erythrocytes.

The protein localises to the secreted. The enzyme catalyses an acylcholine + H2O = a carboxylate + choline + H(+). Esterase with broad substrate specificity. Contributes to the inactivation of the neurotransmitter acetylcholine. Can degrade neurotoxic organophosphate esters. The sequence is that of Cholinesterase (BCHE) from Macaca mulatta (Rhesus macaque).